The primary structure comprises 300 residues: MAEKPQLVNNLPEDVETDECMNKYTHIYSPDLLSDQVAFITGGGSGIGFRIAEVLMRHGCDTVIASRNLEKISQAAKKLTSTTGRRCLPIAMDVRQPETILAAVDETLKTFGRVDILINNAAGNFLCPATSLSFNAFKTVMEIDTMGTFNTSKVIYDKWFKDHGGSIVNISATLGYRGQALQVHAGSAKAANDAMTRHLAVEWGPSGVRVNTVAPGPISGTEGYRRLGGSHAETAGAFHSIPLQRAGNKTEMAHAVLFLASRASSYVTGSVLVADGGAWLTSANDVERLLGIVSSRSAKL.

Residues 42-47 (GGGSGI), 67-71 (RNLEK), and Asp93 each bind NADP(+). Residue Arg67 participates in substrate binding. Residues Arg95, Phe125, and 133–135 (SFN) each bind substrate. Residues Lys189 and 215-221 (PGPISGT) contribute to the NADP(+) site. Arg226 contributes to the substrate binding site. Residues 298–300 (AKL) carry the Microbody targeting signal motif.

This sequence belongs to the short-chain dehydrogenases/reductases (SDR) family. 2,4-dienoyl-CoA reductase subfamily. As to quaternary structure, monomer, dimer and oligomer.

It is found in the peroxisome. The catalysed reaction is a (2E,4Z)-dienoyl-CoA + NADPH + H(+) = a 4,5-saturated-(3E)-enoyl-CoA + NADP(+). It catalyses the reaction a (2E,4E)-dienoyl-CoA + NADPH + H(+) = a 4,5-saturated-(3E)-enoyl-CoA + NADP(+). It carries out the reaction (2E,4E)-hexadienoyl-CoA + NADPH + H(+) = (3E)-hexenoyl-CoA + NADP(+). The enzyme catalyses (2E,4E)-decadienoyl-CoA + NADPH + H(+) = (3E)-decenoyl-CoA + NADP(+). The catalysed reaction is (2E,4Z,7Z,10Z,13Z,16Z,19Z)-docosaheptaenoyl-CoA + NADPH + H(+) = (3E,7Z,10Z,13Z,16Z,19Z)-docosahexaenoyl-CoA + NADP(+). Its function is as follows. Auxiliary enzyme of beta-oxidation. Participates in the degradation of unsaturated fatty enoyl-CoA esters having double bonds in both even- and odd-numbered positions in peroxisome. Catalyzes the NADP-dependent reduction of 2,4-dienoyl-CoA to yield trans-3-enoyl-CoA. This is Peroxisomal 2,4-dienoyl-CoA reductase [(3E)-enoyl-CoA-producing] (decr2) from Danio rerio (Zebrafish).